The following is a 153-amino-acid chain: Ribosome maturation factor RimP (153 aa).

It belongs to the RimP family.

It localises to the cytoplasm. Its function is as follows. Required for maturation of 30S ribosomal subunits. This Coxiella burnetii (strain Dugway 5J108-111) protein is Ribosome maturation factor RimP.